Here is a 325-residue protein sequence, read N- to C-terminus: Cytochrome c1, heme protein, mitochondrial (325 aa).

Residues 1-84 (MAAAAATLRG…AVALHSAVSA (84 aa)) constitute a mitochondrion transit peptide. The Mitochondrial intermembrane portion of the chain corresponds to 85–281 (SDLELHPPSY…TFLRWAAEPE (197 aa)). Positions 108–209 (TSIRRGFQVY…IVRARHGGED (102 aa)) constitute a Cytochrome c domain. Residues Cys-121, Cys-124, His-125, and Met-244 each contribute to the heme c site. Residues 282–315 (HDHRKRMGLKMLLMMGLLLPLVYAMKRHKWSVLK) form a helical membrane-spanning segment. Over 316–325 (SRKLAYRPPK) the chain is Mitochondrial matrix.

This sequence belongs to the cytochrome c family. Component of the ubiquinol-cytochrome c oxidoreductase (cytochrome b-c1 complex, complex III, CIII), a multisubunit enzyme composed of 11 subunits. The complex is composed of 3 respiratory subunits cytochrome b, cytochrome c1 and Rieske protein UQCRFS1, 2 core protein subunits UQCRC1/QCR1 and UQCRC2/QCR2, and 6 low-molecular weight protein subunits UQCRH/QCR6, UQCRB/QCR7, UQCRQ/QCR8, UQCR10/QCR9, UQCR11/QCR10 and subunit 9, the cleavage product of Rieske protein UQCRFS1. The complex exists as an obligatory dimer and forms supercomplexes (SCs) in the inner mitochondrial membrane with NADH-ubiquinone oxidoreductase (complex I, CI) and cytochrome c oxidase (complex IV, CIV), resulting in different assemblies (supercomplex SCI(1)III(2)IV(1) and megacomplex MCI(2)III(2)IV(2)). Interacts with FLVCR2; this interaction occurs in the absence of heme and is disrupted upon heme binding. Heme c is required as a cofactor.

It localises to the mitochondrion inner membrane. It carries out the reaction a quinol + 2 Fe(III)-[cytochrome c](out) = a quinone + 2 Fe(II)-[cytochrome c](out) + 2 H(+)(out). Its function is as follows. Component of the ubiquinol-cytochrome c oxidoreductase, a multisubunit transmembrane complex that is part of the mitochondrial electron transport chain which drives oxidative phosphorylation. The respiratory chain contains 3 multisubunit complexes succinate dehydrogenase (complex II, CII), ubiquinol-cytochrome c oxidoreductase (cytochrome b-c1 complex, complex III, CIII) and cytochrome c oxidase (complex IV, CIV), that cooperate to transfer electrons derived from NADH and succinate to molecular oxygen, creating an electrochemical gradient over the inner membrane that drives transmembrane transport and the ATP synthase. The cytochrome b-c1 complex catalyzes electron transfer from ubiquinol to cytochrome c, linking this redox reaction to translocation of protons across the mitochondrial inner membrane, with protons being carried across the membrane as hydrogens on the quinol. In the process called Q cycle, 2 protons are consumed from the matrix, 4 protons are released into the intermembrane space and 2 electrons are passed to cytochrome c. Cytochrome c1 is a catalytic core subunit containing a c-type heme. It transfers electrons from the [2Fe-2S] iron-sulfur cluster of the Rieske protein to cytochrome c. This chain is Cytochrome c1, heme protein, mitochondrial (CYC1), found in Bos taurus (Bovine).